A 181-amino-acid chain; its full sequence is UPF0301 protein COXBURSA331_A2219 (181 aa).

Belongs to the UPF0301 (AlgH) family.

This chain is UPF0301 protein COXBURSA331_A2219, found in Coxiella burnetii (strain RSA 331 / Henzerling II).